A 217-amino-acid polypeptide reads, in one-letter code: FMN-dependent NADH:quinone oxidoreductase (217 aa).

FMN contacts are provided by residues Ser-10, 17–19, and 137–140; these read SAS and SRGG.

It belongs to the azoreductase type 1 family. In terms of assembly, homodimer. It depends on FMN as a cofactor.

It carries out the reaction 2 a quinone + NADH + H(+) = 2 a 1,4-benzosemiquinone + NAD(+). The enzyme catalyses N,N-dimethyl-1,4-phenylenediamine + anthranilate + 2 NAD(+) = 2-(4-dimethylaminophenyl)diazenylbenzoate + 2 NADH + 2 H(+). Functionally, quinone reductase that provides resistance to thiol-specific stress caused by electrophilic quinones. Its function is as follows. Also exhibits azoreductase activity. Catalyzes the reductive cleavage of the azo bond in aromatic azo compounds to the corresponding amines. The chain is FMN-dependent NADH:quinone oxidoreductase from Streptomyces avermitilis (strain ATCC 31267 / DSM 46492 / JCM 5070 / NBRC 14893 / NCIMB 12804 / NRRL 8165 / MA-4680).